The primary structure comprises 165 residues: Aspartate carbamoyltransferase regulatory chain (165 aa).

Positions 121, 126, 149, and 152 each coordinate Zn(2+).

Belongs to the PyrI family. As to quaternary structure, contains catalytic and regulatory chains. The cofactor is Zn(2+).

Functionally, involved in allosteric regulation of aspartate carbamoyltransferase. The sequence is that of Aspartate carbamoyltransferase regulatory chain from Methanoregula boonei (strain DSM 21154 / JCM 14090 / 6A8).